The sequence spans 325 residues: Thiamine-monophosphate kinase (325 aa).

Mg(2+)-binding residues include Asp-30, Ser-45, Thr-46, and Asp-47. Residue His-54 participates in substrate binding. Residues Asp-75 and Asp-122 each contribute to the Mg(2+) site. ATP contacts are provided by residues 121 to 122 (GD) and Arg-146. Asp-212 lines the Mg(2+) pocket. Ser-214 serves as a coordination point for ATP. Asp-215 lines the Mg(2+) pocket. 2 residues coordinate substrate: Glu-263 and Tyr-319.

It belongs to the thiamine-monophosphate kinase family.

It catalyses the reaction thiamine phosphate + ATP = thiamine diphosphate + ADP. Its pathway is cofactor biosynthesis; thiamine diphosphate biosynthesis; thiamine diphosphate from thiamine phosphate: step 1/1. Its function is as follows. Catalyzes the ATP-dependent phosphorylation of thiamine-monophosphate (TMP) to form thiamine-pyrophosphate (TPP), the active form of vitamin B1. The polypeptide is Thiamine-monophosphate kinase (Escherichia coli O157:H7).